We begin with the raw amino-acid sequence, 661 residues long: Threonine--tRNA ligase (661 aa).

One can recognise a TGS domain in the interval 1–64 (MSHSVSLTFP…ADGKIEIVTR (64 aa)). Residues 245 to 547 (DHRRLGREMD…LLENYAGHMP (303 aa)) are catalytic. Residues C341, H392, and H524 each contribute to the Zn(2+) site.

Belongs to the class-II aminoacyl-tRNA synthetase family. As to quaternary structure, homodimer. It depends on Zn(2+) as a cofactor.

The protein localises to the cytoplasm. It catalyses the reaction tRNA(Thr) + L-threonine + ATP = L-threonyl-tRNA(Thr) + AMP + diphosphate + H(+). In terms of biological role, catalyzes the attachment of threonine to tRNA(Thr) in a two-step reaction: L-threonine is first activated by ATP to form Thr-AMP and then transferred to the acceptor end of tRNA(Thr). Also edits incorrectly charged L-seryl-tRNA(Thr). This Sinorhizobium fredii (strain NBRC 101917 / NGR234) protein is Threonine--tRNA ligase.